A 248-amino-acid chain; its full sequence is uncharacterized protein (248 aa).

Positions 33 to 57 form a coiled coil; the sequence is EWQLSEGQKRCEEINRQNRQLRVEK.

This is an uncharacterized protein from Escherichia coli (strain K12).